Consider the following 503-residue polypeptide: Arabinose import ATP-binding protein AraG 1 (503 aa).

ABC transporter domains are found at residues 5–240 (LRFD…MVGR) and 251–497 (RALG…LPQT). Position 37–44 (37–44 (GENGAGKS)) interacts with ATP.

The protein belongs to the ABC transporter superfamily. Arabinose importer (TC 3.A.1.2.2) family. In terms of assembly, the complex is composed of two ATP-binding proteins (AraG), two transmembrane proteins (AraH) and a solute-binding protein (AraF).

It localises to the cell inner membrane. The enzyme catalyses L-arabinose(out) + ATP + H2O = L-arabinose(in) + ADP + phosphate + H(+). Its function is as follows. Part of the ABC transporter complex AraFGH involved in arabinose import. Responsible for energy coupling to the transport system. The polypeptide is Arabinose import ATP-binding protein AraG 1 (Burkholderia ambifaria (strain ATCC BAA-244 / DSM 16087 / CCUG 44356 / LMG 19182 / AMMD) (Burkholderia cepacia (strain AMMD))).